The chain runs to 270 residues: Cyclic pyranopterin monophosphate synthase, mitochondrial (270 aa).

The N-terminal 32 residues, 1 to 32 (MISTLRRAVFLRRFPAVVSPIKRAFSSRIDDE), are a transit peptide targeting the mitochondrion. Substrate is bound by residues 187 to 189 (LCH) and 225 to 226 (ME). The active site involves Asp240.

Belongs to the MoaC family. Homohexamer. As to expression, abundantly expressed in the roots.

It localises to the mitochondrion matrix. It carries out the reaction (8S)-3',8-cyclo-7,8-dihydroguanosine 5'-triphosphate = cyclic pyranopterin phosphate + diphosphate. Its pathway is cofactor biosynthesis; molybdopterin biosynthesis. In terms of biological role, catalyzes the conversion of (8S)-3',8-cyclo-7,8-dihydroguanosine 5'-triphosphate to cyclic pyranopterin monophosphate (cPMP). The chain is Cyclic pyranopterin monophosphate synthase, mitochondrial (CNX3) from Arabidopsis thaliana (Mouse-ear cress).